The primary structure comprises 463 residues: Lipase 6 (463 aa).

Positions 1–16 are cleaved as a signal peptide; that stretch reads MRDLILFLSLLHTIFA. A disulfide bridge connects residues Cys112 and Cys285. The Charge relay system role is filled by Ser196. Asn231 is a glycosylation site (N-linked (GlcNAc...) asparagine). Catalysis depends on charge relay system residues Asp348 and His381. A disulfide bond links Cys364 and Cys409. An N-linked (GlcNAc...) asparagine glycan is attached at Asn422.

The protein belongs to the AB hydrolase superfamily. Lipase family. Class Lip subfamily.

It localises to the secreted. It carries out the reaction a triacylglycerol + H2O = a diacylglycerol + a fatty acid + H(+). Its function is as follows. Secreted lipase that is able to hydrolyze both the neutral triacylglycerols and the monopalmitate ester Tween 40, allowing the use of hydrolyzed products as carbon sources. Has broad lipolytic activity, which may be important for colonization and subsequent infection, therefore contributing to the persistence and virulence in human tissue. This chain is Lipase 6, found in Candida albicans (strain SC5314 / ATCC MYA-2876) (Yeast).